We begin with the raw amino-acid sequence, 227 residues long: Fibrillarin-like rRNA/tRNA 2'-O-methyltransferase (227 aa).

Residues 82-83 (TT), 100-101 (EF), 125-126 (DA), and 145-148 (DVAQ) contribute to the S-adenosyl-L-methionine site.

It belongs to the methyltransferase superfamily. Fibrillarin family. In terms of assembly, interacts with nop5. Component of box C/D small ribonucleoprotein (sRNP) particles that contain rpl7ae, FlpA and nop5, plus a guide RNA.

Functionally, involved in pre-rRNA and tRNA processing. Utilizes the methyl donor S-adenosyl-L-methionine to catalyze the site-specific 2'-hydroxyl methylation of ribose moieties in rRNA and tRNA. Site specificity is provided by a guide RNA that base pairs with the substrate. Methylation occurs at a characteristic distance from the sequence involved in base pairing with the guide RNA. The chain is Fibrillarin-like rRNA/tRNA 2'-O-methyltransferase from Methanosarcina mazei (strain ATCC BAA-159 / DSM 3647 / Goe1 / Go1 / JCM 11833 / OCM 88) (Methanosarcina frisia).